We begin with the raw amino-acid sequence, 132 residues long: Bombinin-like peptides (132 aa).

Positions 1–18 are cleaved as a signal peptide; sequence MNFKYIIAVSFLIASAYA. A propeptide spanning residues 19–42 is cleaved from the precursor; it reads RSEEYDIQSLSQRDVLEEESLRKI. Residue phenylalanine 68 is modified to Phenylalanine amide. Positions 72 to 112 are excised as a propeptide; that stretch reads TAEDHEVMKRLEAAMRDLDSLDYPEEASERETRGFNQEEKE. A Leucine amide modification is found at leucine 131.

Belongs to the bombinin family. In terms of tissue distribution, expressed by the skin glands.

It localises to the secreted. Its function is as follows. Has antimicrobial activity against Gram-negative bacterium E.coli (MIC=26.3 uM), Gram-positive bacterium S.aureus (MIC=26.3 uM) and yeast C.albicans (MIC=52.5 uM). Has moderate hemolytic activity towards human erythrocytes at a concentration of 52.2 uM. In terms of biological role, has no antimicrobial activity at concentrations up to 161 uM. Has moderate hemolytic activity towards human erythrocytes at a concentration of 40.3 uM. This Bombina orientalis (Oriental fire-bellied toad) protein is Bombinin-like peptides.